A 109-amino-acid polypeptide reads, in one-letter code: V-type proton ATPase 16 kDa proteolipid subunit (109 aa).

Residues 1 to 20 (VPVVMAGVLGIYGLIIAVII) form a helical membrane-spanning segment. Residues 21-39 (STGINPKAKPYYLFDGYAH) lie on the Lumenal side of the membrane. The helical transmembrane segment at 40–61 (LSSGLACGLAGLAAGMAIGIVG) threads the bilayer. Over 62 to 73 (DAGVRANAQQPK) the chain is Cytoplasmic. Residues 74-99 (LFVGMILILIFAEALALYGLIVGIIL) traverse the membrane as a helical segment. Over 100-109 (SSRAGQSRAD) the chain is Lumenal.

This sequence belongs to the V-ATPase proteolipid subunit family. V-ATPase is a heteromultimeric enzyme composed of a peripheral catalytic V1 complex (main components: subunits A, B, C, D, E, and F) attached to an integral membrane V0 proton pore complex (main component: the proteolipid protein; which is present as a hexamer that forms the proton-conducting pore). High expression in the mesocotyl tip of etiolated seedlings compared to the base.

The protein localises to the vacuole membrane. Its function is as follows. Proton-conducting pore forming subunit of the membrane integral V0 complex of vacuolar ATPase. V-ATPase is responsible for acidifying a variety of intracellular compartments in eukaryotic cells. This is V-type proton ATPase 16 kDa proteolipid subunit from Zea mays (Maize).